Consider the following 1433-residue polypeptide: DNA-directed RNA polymerase subunit beta' (1433 aa).

Zn(2+) is bound by residues Cys-66, Cys-68, Cys-81, and Cys-84. Mg(2+)-binding residues include Asp-473, Asp-475, and Asp-477. 4 residues coordinate Zn(2+): Cys-815, Cys-889, Cys-896, and Cys-899.

This sequence belongs to the RNA polymerase beta' chain family. In terms of assembly, the RNAP catalytic core consists of 2 alpha, 1 beta, 1 beta' and 1 omega subunit. When a sigma factor is associated with the core the holoenzyme is formed, which can initiate transcription. The cofactor is Mg(2+). Zn(2+) serves as cofactor.

It carries out the reaction RNA(n) + a ribonucleoside 5'-triphosphate = RNA(n+1) + diphosphate. In terms of biological role, DNA-dependent RNA polymerase catalyzes the transcription of DNA into RNA using the four ribonucleoside triphosphates as substrates. The polypeptide is DNA-directed RNA polymerase subunit beta' (Porphyromonas gingivalis (strain ATCC 33277 / DSM 20709 / CIP 103683 / JCM 12257 / NCTC 11834 / 2561)).